Reading from the N-terminus, the 147-residue chain is UPF0306 protein YhbP (147 aa).

Belongs to the UPF0306 family.

The protein is UPF0306 protein YhbP of Escherichia coli O17:K52:H18 (strain UMN026 / ExPEC).